The chain runs to 347 residues: GMP reductase (347 aa).

108–131 (ADFVKMQQILALSPGLKFICIDVA) is a binding site for NADP(+). Residues Gly-181 and Gly-183 each contribute to the K(+) site. Cys-186 serves as the catalytic Thioimidate intermediate. Position 216 to 239 (216 to 239 (IVSDGGCSVPGDVAKAFGGGADFV)) interacts with NADP(+).

This sequence belongs to the IMPDH/GMPR family. GuaC type 1 subfamily. As to quaternary structure, homotetramer.

The catalysed reaction is IMP + NH4(+) + NADP(+) = GMP + NADPH + 2 H(+). Catalyzes the irreversible NADPH-dependent deamination of GMP to IMP. It functions in the conversion of nucleobase, nucleoside and nucleotide derivatives of G to A nucleotides, and in maintaining the intracellular balance of A and G nucleotides. This is GMP reductase from Serratia proteamaculans (strain 568).